A 122-amino-acid chain; its full sequence is Large ribosomal subunit protein uL14 (122 aa).

The protein belongs to the universal ribosomal protein uL14 family. In terms of assembly, part of the 50S ribosomal subunit. Forms a cluster with proteins L3 and L19. In the 70S ribosome, L14 and L19 interact and together make contacts with the 16S rRNA in bridges B5 and B8.

Functionally, binds to 23S rRNA. Forms part of two intersubunit bridges in the 70S ribosome. In Trichormus variabilis (strain ATCC 29413 / PCC 7937) (Anabaena variabilis), this protein is Large ribosomal subunit protein uL14.